The primary structure comprises 400 residues: DNA polymerase IV (400 aa).

In terms of domain architecture, UmuC spans 8-191 (ILLCDANSFF…LPVRELFGIG (184 aa)). Residues Asp12 and Asp109 each coordinate Mg(2+). Glu110 is an active-site residue.

Belongs to the DNA polymerase type-Y family. In terms of assembly, monomer. Mg(2+) is required as a cofactor.

The protein localises to the cytoplasm. It carries out the reaction DNA(n) + a 2'-deoxyribonucleoside 5'-triphosphate = DNA(n+1) + diphosphate. Functionally, poorly processive, error-prone DNA polymerase involved in untargeted mutagenesis. Copies undamaged DNA at stalled replication forks, which arise in vivo from mismatched or misaligned primer ends. These misaligned primers can be extended by PolIV. Exhibits no 3'-5' exonuclease (proofreading) activity. May be involved in translesional synthesis, in conjunction with the beta clamp from PolIII. The polypeptide is DNA polymerase IV (Moorella thermoacetica (strain ATCC 39073 / JCM 9320)).